Consider the following 673-residue polypeptide: Armadillo repeat-containing protein 8 (673 aa).

A2 carries the post-translational modification N-acetylalanine. ARM repeat units lie at residues 51–92, 95–134, 138–176, 178–217, 224–265, 269–309, 313–352, 374–413, 416–455, 458–497, 501–540, 543–585, 588–627, and 634–673; these read NKQK…SLAM, ENNV…TIFT, TPEE…HCCK, PDHQ…VLAF, MTLV…YMCR, IRTD…YLIE, ELQR…HDLK, DIRK…SLSR, QQLR…NLLL, SPSK…NMAF, QKIK…NLLS, PHID…NIAD, TAKE…NLTW, and QERQ…QYLA. S337 is modified (phosphoserine). A Phosphoserine modification is found at S512.

Identified in the CTLH complex that contains GID4, RANBP9 and/or RANBP10, MKLN1, MAEA, RMND5A (or alternatively its paralog RMND5B), GID8, ARMC8, WDR26 and YPEL5. Within this complex, MAEA, RMND5A (or alternatively its paralog RMND5B), GID8, WDR26, and RANBP9 and/or RANBP10 form the catalytic core, while GID4, MKLN1, ARMC8 and YPEL5 have ancillary roles.

The protein localises to the nucleus. Its subcellular location is the cytoplasm. Functionally, component of the CTLH E3 ubiquitin-protein ligase complex that selectively accepts ubiquitin from UBE2H and mediates ubiquitination and subsequent proteasomal degradation of the transcription factor HBP1. The polypeptide is Armadillo repeat-containing protein 8 (Armc8) (Mus musculus (Mouse)).